A 331-amino-acid chain; its full sequence is MQFIDQARIAVKAGRGGDGICAFRREKYVPAGGPSGGDGGRGGDVVLQADSNLQTLLDFKYKRLFQADDGRRGGPNRSTGASANTLLIRVPCGTEVRDLGTDLLLGDLTDNGEQLMIATGGKGGLGNAHYLSNRNRAPEKFTEGKDGEERELQLELKLLAEVGLVGLPNAGKSTLISVLSAARPKIADYPFTTLVPNLGVVRRPSGDGTVFADIPGLIAGAAQGAGLGHDFLRHIERTRVLIHLVDGSSPDPIADAQVLLGELEAYGNGLLERPRLLVLSKSELLDEEQLEALPAQLSDTLGQPVQVISAVTGQGLDGLLQQVWQELGVSS.

An Obg domain is found at 1–159; sequence MQFIDQARIA…RELQLELKLL (159 aa). The OBG-type G domain maps to 160–328; the sequence is AEVGLVGLPN…LLQQVWQELG (169 aa). GTP is bound by residues 166-173, 191-195, 213-216, 280-283, and 309-311; these read GLPNAGKS, FTTLV, DIPG, SKSE, and SAV. Positions 173 and 193 each coordinate Mg(2+).

Belongs to the TRAFAC class OBG-HflX-like GTPase superfamily. OBG GTPase family. Monomer. The cofactor is Mg(2+).

The protein localises to the cytoplasm. In terms of biological role, an essential GTPase which binds GTP, GDP and possibly (p)ppGpp with moderate affinity, with high nucleotide exchange rates and a fairly low GTP hydrolysis rate. Plays a role in control of the cell cycle, stress response, ribosome biogenesis and in those bacteria that undergo differentiation, in morphogenesis control. This chain is GTPase Obg, found in Synechococcus sp. (strain RCC307).